The primary structure comprises 314 residues: Aspartate carbamoyltransferase catalytic subunit (314 aa).

Residues R63 and T64 each contribute to the carbamoyl phosphate site. K91 contributes to the L-aspartate binding site. Carbamoyl phosphate-binding residues include R113, H143, and Q146. L-aspartate is bound by residues R176 and R228. 2 residues coordinate carbamoyl phosphate: A269 and P270.

Belongs to the aspartate/ornithine carbamoyltransferase superfamily. ATCase family. Heterododecamer (2C3:3R2) of six catalytic PyrB chains organized as two trimers (C3), and six regulatory PyrI chains organized as three dimers (R2).

The enzyme catalyses carbamoyl phosphate + L-aspartate = N-carbamoyl-L-aspartate + phosphate + H(+). Its pathway is pyrimidine metabolism; UMP biosynthesis via de novo pathway; (S)-dihydroorotate from bicarbonate: step 2/3. Functionally, catalyzes the condensation of carbamoyl phosphate and aspartate to form carbamoyl aspartate and inorganic phosphate, the committed step in the de novo pyrimidine nucleotide biosynthesis pathway. The chain is Aspartate carbamoyltransferase catalytic subunit from Cutibacterium acnes (strain DSM 16379 / KPA171202) (Propionibacterium acnes).